A 355-amino-acid polypeptide reads, in one-letter code: Peptide chain release factor 1 (355 aa).

Gln-233 carries the N5-methylglutamine modification.

This sequence belongs to the prokaryotic/mitochondrial release factor family. Post-translationally, methylated by PrmC. Methylation increases the termination efficiency of RF1.

Its subcellular location is the cytoplasm. Its function is as follows. Peptide chain release factor 1 directs the termination of translation in response to the peptide chain termination codons UAG and UAA. The chain is Peptide chain release factor 1 from Caldicellulosiruptor saccharolyticus (strain ATCC 43494 / DSM 8903 / Tp8T 6331).